A 25-amino-acid chain; its full sequence is Antimicrobial peptide 2 (25 aa).

In terms of tissue distribution, expressed by the skin glands.

The protein localises to the secreted. Functionally, has very strong antibacterial activity against Gram-positive bacterium S.aureus and very weak activity against Gram-negative bacterium E.coli. In Xenopus tropicalis (Western clawed frog), this protein is Antimicrobial peptide 2.